Here is a 260-residue protein sequence, read N- to C-terminus: UPF0246 protein Bphyt_1375 (260 aa).

It belongs to the UPF0246 family.

The sequence is that of UPF0246 protein Bphyt_1375 from Paraburkholderia phytofirmans (strain DSM 17436 / LMG 22146 / PsJN) (Burkholderia phytofirmans).